A 421-amino-acid polypeptide reads, in one-letter code: UDP-N-acetylglucosamine 1-carboxyvinyltransferase (421 aa).

22 to 23 (KN) lines the phosphoenolpyruvate pocket. Arg-92 is a UDP-N-acetyl-alpha-D-glucosamine binding site. Catalysis depends on Cys-116, which acts as the Proton donor. Cys-116 is subject to 2-(S-cysteinyl)pyruvic acid O-phosphothioketal. UDP-N-acetyl-alpha-D-glucosamine contacts are provided by residues 121–125 (RPVDQ), Asp-308, and Ile-330.

It belongs to the EPSP synthase family. MurA subfamily.

It is found in the cytoplasm. It catalyses the reaction phosphoenolpyruvate + UDP-N-acetyl-alpha-D-glucosamine = UDP-N-acetyl-3-O-(1-carboxyvinyl)-alpha-D-glucosamine + phosphate. It functions in the pathway cell wall biogenesis; peptidoglycan biosynthesis. Its function is as follows. Cell wall formation. Adds enolpyruvyl to UDP-N-acetylglucosamine. The protein is UDP-N-acetylglucosamine 1-carboxyvinyltransferase of Ralstonia nicotianae (strain ATCC BAA-1114 / GMI1000) (Ralstonia solanacearum).